We begin with the raw amino-acid sequence, 137 residues long: Diacylglycerol kinase (137 aa).

An a divalent metal cation-binding site is contributed by glutamate 42. 2 helical membrane passes run leucine 49–phenylalanine 67 and alanine 73–isoleucine 89. Residue glutamate 83 is the Proton acceptor of the active site. Glutamate 90 contacts a divalent metal cation. The helical transmembrane segment at serine 112–phenylalanine 132 threads the bilayer.

The protein belongs to the bacterial diacylglycerol kinase family. Mg(2+) is required as a cofactor.

The protein localises to the cell inner membrane. It catalyses the reaction a 1,2-diacyl-sn-glycerol + ATP = a 1,2-diacyl-sn-glycero-3-phosphate + ADP + H(+). Functionally, catalyzes the ATP-dependent phosphorylation of sn-l,2-diacylglycerol (DAG) to phosphatidic acid. Involved in the recycling of diacylglycerol produced as a by-product during membrane-derived oligosaccharide (MDO) biosynthesis. This Sinorhizobium sp protein is Diacylglycerol kinase (dgkA).